We begin with the raw amino-acid sequence, 345 residues long: Methylthioribose-1-phosphate isomerase (345 aa).

Residues 47 to 49, Arg90, and Gln197 each bind substrate; that span reads RGA. Asp238 (proton donor) is an active-site residue. 248–249 lines the substrate pocket; the sequence is NK.

It belongs to the eIF-2B alpha/beta/delta subunits family. MtnA subfamily.

The catalysed reaction is 5-(methylsulfanyl)-alpha-D-ribose 1-phosphate = 5-(methylsulfanyl)-D-ribulose 1-phosphate. Its pathway is amino-acid biosynthesis; L-methionine biosynthesis via salvage pathway; L-methionine from S-methyl-5-thio-alpha-D-ribose 1-phosphate: step 1/6. Its function is as follows. Catalyzes the interconversion of methylthioribose-1-phosphate (MTR-1-P) into methylthioribulose-1-phosphate (MTRu-1-P). This Thermoanaerobacter pseudethanolicus (strain ATCC 33223 / 39E) (Clostridium thermohydrosulfuricum) protein is Methylthioribose-1-phosphate isomerase.